A 374-amino-acid polypeptide reads, in one-letter code: Alcohol dehydrogenase class-3 (374 aa).

S2 is subject to N-acetylserine. Positions 45, 67, 97, 100, 103, 111, and 174 each coordinate Zn(2+). K233 is subject to N6-succinyllysine. Position 247 is a phosphoserine (S247). K315 bears the N6-succinyllysine mark. 2 positions are modified to phosphoserine: S324 and S351.

Belongs to the zinc-containing alcohol dehydrogenase family. Class-III subfamily. Homodimer. The cofactor is Zn(2+).

Its subcellular location is the cytoplasm. The enzyme catalyses a primary alcohol + NAD(+) = an aldehyde + NADH + H(+). It catalyses the reaction a secondary alcohol + NAD(+) = a ketone + NADH + H(+). The catalysed reaction is S-(hydroxymethyl)glutathione + NADP(+) = S-formylglutathione + NADPH + H(+). It carries out the reaction S-(hydroxymethyl)glutathione + NAD(+) = S-formylglutathione + NADH + H(+). The enzyme catalyses 20-oxo-(5Z,8Z,11Z,14Z)-eicosatetraenoate + NAD(+) + H2O = (5Z,8Z,11Z,14Z)-eicosatetraenedioate + NADH + 2 H(+). It catalyses the reaction 20-hydroxy-(5Z,8Z,11Z,14Z)-eicosatetraenoate + NAD(+) = 20-oxo-(5Z,8Z,11Z,14Z)-eicosatetraenoate + NADH + H(+). The catalysed reaction is S-nitrosoglutathione + NADH + H(+) = S-(hydroxysulfenamide)glutathione + NAD(+). In terms of biological role, catalyzes the oxidation of long-chain primary alcohols and the oxidation of S-(hydroxymethyl) glutathione. Also oxidizes long chain omega-hydroxy fatty acids, such as 20-HETE, producing both the intermediate aldehyde, 20-oxoarachidonate and the end product, a dicarboxylic acid, (5Z,8Z,11Z,14Z)-eicosatetraenedioate. Class-III ADH is remarkably ineffective in oxidizing ethanol. Required for clearance of cellular formaldehyde, a cytotoxic and carcinogenic metabolite that induces DNA damage. Also acts as a S-nitroso-glutathione reductase by catalyzing the NADH-dependent reduction of S-nitrosoglutathione, thereby regulating protein S-nitrosylation. The protein is Alcohol dehydrogenase class-3 of Equus caballus (Horse).